Here is a 23-residue protein sequence, read N- to C-terminus: Phallacidin proprotein 1 (23 aa).

P1 is a propeptide. The cyclopeptide (Ala-Pro) cross-link spans 2-8; it reads AWLVDCP. The segment at residues 3–7 is a cross-link (2'-cysteinyl-6'-hydroxytryptophan sulfoxide (Trp-Cys)); that stretch reads WLVDC. A propeptide spanning residues 9–23 is cleaved from the precursor; sequence CVGDDINRLLTRGEK.

This sequence belongs to the MSDIN fungal toxin family. Post-translationally, processed by the macrocyclase-peptidase enzyme POPB to yield a toxic cyclic heptapeptide. POPB first removes 10 residues from the N-terminus. Conformational trapping of the remaining peptide forces the enzyme to release this intermediate rather than proceed to macrocyclization. The enzyme rebinds the remaining peptide in a different conformation and catalyzes macrocyclization of the N-terminal 7 residues.

In terms of biological role, major toxin that belongs to the bicyclic heptapeptides called phallotoxins. Although structurally related to amatoxins, phallotoxins have a different mode of action, which is the stabilization of F-actin. Phallotoxins are poisonous when administered parenterally, but not orally because of poor absorption. The chain is Phallacidin proprotein 1 from Amanita phalloides (Death cap).